The following is a 256-amino-acid chain: Tryptophan synthase alpha chain (256 aa).

Catalysis depends on proton acceptor residues Glu-44 and Asp-55.

Belongs to the TrpA family. In terms of assembly, tetramer of two alpha and two beta chains.

It carries out the reaction (1S,2R)-1-C-(indol-3-yl)glycerol 3-phosphate + L-serine = D-glyceraldehyde 3-phosphate + L-tryptophan + H2O. It functions in the pathway amino-acid biosynthesis; L-tryptophan biosynthesis; L-tryptophan from chorismate: step 5/5. Its function is as follows. The alpha subunit is responsible for the aldol cleavage of indoleglycerol phosphate to indole and glyceraldehyde 3-phosphate. The polypeptide is Tryptophan synthase alpha chain (Coxiella burnetii (strain CbuK_Q154) (Coxiella burnetii (strain Q154))).